Consider the following 105-residue polypeptide: UPF0235 protein A1E_05380 (105 aa).

Belongs to the UPF0235 family.

This is UPF0235 protein A1E_05380 from Rickettsia canadensis (strain McKiel).